A 236-amino-acid polypeptide reads, in one-letter code: MSYNLTDPYEIARYIKEAKKSTPIKAYIEGDLSNCDFTNIEKFNSGDLYILFGESEEILVIIENNKDKIKNCRIEQDRRKSAIPLLDMLKVNARIEPGAIIRDKVLIGENAVIMMGAVINIGAEIGEGTMVDMNAVVGARGKLGKNVHLGAGAVVAGVLEPPSSDPCTIEDNVLIGANAVILEGVKIGKGSVVAAGSIVTTDVPENVVVAGAPAKIIKEVDVKTKDKTKLLDDLRK.

This sequence belongs to the transferase hexapeptide repeat family. DapH subfamily.

It carries out the reaction (S)-2,3,4,5-tetrahydrodipicolinate + acetyl-CoA + H2O = L-2-acetamido-6-oxoheptanedioate + CoA. Its pathway is amino-acid biosynthesis; L-lysine biosynthesis via DAP pathway; LL-2,6-diaminopimelate from (S)-tetrahydrodipicolinate (acetylase route): step 1/3. Its function is as follows. Catalyzes the transfer of an acetyl group from acetyl-CoA to tetrahydrodipicolinate. The chain is 2,3,4,5-tetrahydropyridine-2,6-dicarboxylate N-acetyltransferase from Clostridium botulinum (strain Okra / Type B1).